The chain runs to 421 residues: GTPase Obg (421 aa).

Positions 1 to 158 (MYFIDEAINE…FKIKTELKIL (158 aa)) constitute an Obg domain. Residues 159 to 324 (ADVGLIGYPS…LKYKMLEMIK (166 aa)) form the OBG-type G domain. Residues 165 to 172 (GYPSVGKS), 190 to 194 (FTTLK), 211 to 214 (DLPG), 278 to 281 (NKMD), and 305 to 307 (SLL) contribute to the GTP site. Positions 172 and 192 each coordinate Mg(2+). Positions 342–421 (TLEEEKPDFV…ICDRVFEFIT (80 aa)) constitute an OCT domain.

Belongs to the TRAFAC class OBG-HflX-like GTPase superfamily. OBG GTPase family. As to quaternary structure, monomer. Requires Mg(2+) as cofactor.

Its subcellular location is the cytoplasm. An essential GTPase which binds GTP, GDP and possibly (p)ppGpp with moderate affinity, with high nucleotide exchange rates and a fairly low GTP hydrolysis rate. Plays a role in control of the cell cycle, stress response, ribosome biogenesis and in those bacteria that undergo differentiation, in morphogenesis control. This is GTPase Obg from Phytoplasma mali (strain AT).